The sequence spans 544 residues: Protein adenylyltransferase (544 aa).

A Fido domain is found at 63–216; that stretch reads FDTAYLCHIH…LEPMQHLFED (154 aa). ATP contacts are provided by residues 93–94, 106–107, 163–167, and arginine 170; these read FA, RT, and EGNGR.

The protein localises to the secreted. It catalyses the reaction L-tyrosyl-[protein] + ATP = O-(5'-adenylyl)-L-tyrosyl-[protein] + diphosphate. It carries out the reaction L-threonyl-[protein] + ATP = 3-O-(5'-adenylyl)-L-threonyl-[protein] + diphosphate. In terms of biological role, adenylyltransferase involved in virulence by mediating the addition of adenosine 5'-monophosphate (AMP) to specific residue of host target proteins. This is Protein adenylyltransferase (bepA) from Bartonella henselae (strain ATCC 49882 / DSM 28221 / CCUG 30454 / Houston 1) (Rochalimaea henselae).